Consider the following 270-residue polypeptide: MILMSGPCVIESYEALSAVAQALKPLSEKAHIDFYFKASFDKANRTSLESYRGPGLEKGLELLSEIKKQFGYKIITDIHESYQAKHIAKVADVIQIPAFLCRQTDLIVEVAKTERIVNIKKGQFMNPSDMQHSVLKAIKTRGGTQATYEQSQKYGIWLTERGSTFGYGNLVVDMRSLVIMRSFAPVIFDATHSVQMPGAAGGKSGGDSSFVPYLARAAAAVGVDGFFMETHLNPKEALSDGPNMVQTNALIPLIEQLYDIENLTQHKNGK.

Belongs to the KdsA family.

The protein localises to the cytoplasm. The enzyme catalyses D-arabinose 5-phosphate + phosphoenolpyruvate + H2O = 3-deoxy-alpha-D-manno-2-octulosonate-8-phosphate + phosphate. Its pathway is carbohydrate biosynthesis; 3-deoxy-D-manno-octulosonate biosynthesis; 3-deoxy-D-manno-octulosonate from D-ribulose 5-phosphate: step 2/3. The protein operates within bacterial outer membrane biogenesis; lipopolysaccharide biosynthesis. In Helicobacter hepaticus (strain ATCC 51449 / 3B1), this protein is 2-dehydro-3-deoxyphosphooctonate aldolase.